The sequence spans 206 residues: Protein-methionine-sulfoxide reductase heme-binding subunit MsrQ (206 aa).

Transmembrane regions (helical) follow at residues 7–27, 43–63, 77–97, 112–132, 142–162, and 172–192; these read IIIHVCCLGPVAWLAWVLLSG, FLGFSALTILLIMFILGKVFY, LGLWAWFYVVLHVYAYLALEL, GYLIIGAIAFLILTLMALSSW, WWFYLHQLGYYALLLGAIHYV, and SMLYLILSIMILCDALYGLFI.

The protein belongs to the MsrQ family. In terms of assembly, heterodimer of a catalytic subunit (MsrP) and a heme-binding subunit (MsrQ). The cofactor is FMN. Heme b is required as a cofactor.

The protein resides in the cell inner membrane. Part of the MsrPQ system that repairs oxidized periplasmic proteins containing methionine sulfoxide residues (Met-O), using respiratory chain electrons. Thus protects these proteins from oxidative-stress damage caused by reactive species of oxygen and chlorine generated by the host defense mechanisms. MsrPQ is essential for the maintenance of envelope integrity under bleach stress, rescuing a wide series of structurally unrelated periplasmic proteins from methionine oxidation. MsrQ provides electrons for reduction to the reductase catalytic subunit MsrP, using the quinone pool of the respiratory chain. In Pasteurella multocida (strain Pm70), this protein is Protein-methionine-sulfoxide reductase heme-binding subunit MsrQ.